Consider the following 185-residue polypeptide: Ribosome-recycling factor (185 aa).

The protein belongs to the RRF family.

The protein resides in the cytoplasm. Functionally, responsible for the release of ribosomes from messenger RNA at the termination of protein biosynthesis. May increase the efficiency of translation by recycling ribosomes from one round of translation to another. The chain is Ribosome-recycling factor from Vibrio parahaemolyticus serotype O3:K6 (strain RIMD 2210633).